The following is a 177-amino-acid chain: MTKESLEKATFAGGCFWCMVKPFDTQPGIEKVVSGYTGGHTVNPTYKEVCSGTTGHTEAIEITFDPAIFPYEKLVEVYWQQTDPTDAAGQFVDRGDSYRPVIFCHNDEQKEIAEKSKAALDASGRFKKPIVTEIAKAETFYPAEEYHQDFYKKEKAHYEGYQVASGRAAFIDANWKG.

C15 is an active-site residue.

This sequence belongs to the MsrA Met sulfoxide reductase family.

The enzyme catalyses L-methionyl-[protein] + [thioredoxin]-disulfide + H2O = L-methionyl-(S)-S-oxide-[protein] + [thioredoxin]-dithiol. It carries out the reaction [thioredoxin]-disulfide + L-methionine + H2O = L-methionine (S)-S-oxide + [thioredoxin]-dithiol. Functionally, has an important function as a repair enzyme for proteins that have been inactivated by oxidation. Catalyzes the reversible oxidation-reduction of methionine sulfoxide in proteins to methionine. The chain is Peptide methionine sulfoxide reductase MsrA from Listeria welshimeri serovar 6b (strain ATCC 35897 / DSM 20650 / CCUG 15529 / CIP 8149 / NCTC 11857 / SLCC 5334 / V8).